The chain runs to 468 residues: Neuronal acetylcholine receptor subunit alpha-5 (468 aa).

An N-terminal signal peptide occupies residues 1 to 22 (MAARGSGPRALRLLLLVQLVAG). At 23 to 254 (RCGLAGAAGG…VIKRLPLFYT (232 aa)) the chain is on the extracellular side. N-linked (GlcNAc...) asparagine glycosylation is found at N155, N183, and N229. Residues C170 and C184 are joined by a disulfide bond. A disulfide bridge links C234 with C235. A run of 3 helical transmembrane segments spans residues 255–275 (LFLI…FYLP), 282–302 (ICLC…IEEI), and 317–337 (LVFT…AINI). The Cytoplasmic segment spans residues 338 to 429 (HHRSSSTHNA…WKFIAQVLDR (92 aa)). Residues 430–451 (MFLWTFLFVSIVGSLGLFVPVI) traverse the membrane as a helical segment. Residues 452–468 (YKWANILIPVHIGNANK) are Extracellular-facing.

This sequence belongs to the ligand-gated ion channel (TC 1.A.9) family. Acetylcholine receptor (TC 1.A.9.1) subfamily. Alpha-5/CHRNA5 sub-subfamily. Neuronal AChR that forms heteropentamers composed of two different type of subunits: alpha and non-alpha (beta). CHRNA5/alpha-5 subunit is only able to form functional nAChRs when co-assembled with another alpha subunit, can be combined to CHRNA4/alpha-4 or CHRNA3/alpha-3 and CHRNB4/beta-4 or CHRNB2/beta-2 to give rise to functional receptors. Interacts with LYPD6.

Its subcellular location is the synaptic cell membrane. It localises to the cell membrane. The catalysed reaction is Ca(2+)(in) = Ca(2+)(out). The enzyme catalyses K(+)(in) = K(+)(out). It catalyses the reaction Na(+)(in) = Na(+)(out). Its activity is regulated as follows. Activated by a myriad of ligands such as acetylcholine, cytisine, nicotine, choline and epibatidine. Component of neuronal acetylcholine receptors (nAChRs) that function as pentameric, ligand-gated cation channels with high calcium permeability among other activities. nAChRs are excitatory neurotrasnmitter receptors formed by a collection of nAChR subunits known to mediate synaptic transmission in the nervous system and the neuromuscular junction. Each nAchR subunit confers differential attributes to channel properties, including activation, deactivation and desensitization kinetics, pH sensitivity, cation permeability, and binding to allosteric modulators. Has an accessory rather than functional role and is only able to form functional nAChRs when co-assembled with another beta subunit. Participates in pentameric assemblies along with CHRNA3, CHRNA4, CHRNB2 and CHRNB4. Increases receptor sensitivity to acetylcholine and nicotine when associated with CHRNA4 and CHRNB2. Plays a role in nicotine addiction. This Homo sapiens (Human) protein is Neuronal acetylcholine receptor subunit alpha-5.